A 150-amino-acid polypeptide reads, in one-letter code: AWITGQGLGWEAKKEEAFLRSGTQFSGAEGLALPQDGLYYLYCHVGYRGRAPPPGGDPLDRSVTLLSRLYRAGGAYGPGTPELLLEGAETVTPVLDPSRRHEYGPLWYTSVGFGGLVQLRRGERVYVNISHPDMVDYRRGKTFFGAVMVG.

Residues 1 to 149 (AWITGQGLGW…GKTFFGAVMV (149 aa)) enclose the THD domain. A glycan (N-linked (GlcNAc...) asparagine) is linked at N128.

This sequence belongs to the tumor necrosis factor family. In terms of assembly, heterotrimer of either two LTB and one LTA subunits or (less prevalent) two LTA and one LTB subunits.

It localises to the membrane. Cytokine that binds to LTBR/TNFRSF3. May play a specific role in immune response regulation. Provides the membrane anchor for the attachment of the heterotrimeric complex to the cell surface. This chain is Lymphotoxin-beta (LTB), found in Sus scrofa (Pig).